The primary structure comprises 988 residues: Ephrin type-B receptor 3 (988 aa).

The interval 1 to 24 (GVSSRARRPPGSSRSSRRGVTSEL) is disordered. Over 1–534 (GVSSRARRPP…TSKTFQELPL (534 aa)) the chain is Extracellular. The Eph LBD domain occupies 11–189 (GSSRSSRRGV…FYKKCSNTIA (179 aa)). A disulfide bond links cysteine 53 and cysteine 171. Fibronectin type-III domains are found at residues 311 to 424 (VPSA…TNQA) and 425 to 522 (APSA…TAED). N-linked (GlcNAc...) asparagine glycosylation is found at asparagine 323 and asparagine 418. A helical transmembrane segment spans residues 535–555 (IVGSATAGLLFVIVVVIIAIV). Topologically, residues 556-988 (CFRKGMVTEQ…QMNQTLPVQV (433 aa)) are cytoplasmic. Residue tyrosine 604 is modified to Phosphotyrosine; by autocatalysis. In terms of domain architecture, Protein kinase spans 623 to 886 (VKIEEVIGAG…QIVNTLDKLI (264 aa)). Residues 629-637 (IGAGEFGEV) and lysine 655 each bind ATP. Aspartate 748 functions as the Proton acceptor in the catalytic mechanism. The 65-residue stretch at 915–979 (TTFTTVGDWL…LSSIQDMRLQ (65 aa)) folds into the SAM domain. The PDZ-binding motif lies at 986 to 988 (VQV).

The protein belongs to the protein kinase superfamily. Tyr protein kinase family. Ephrin receptor subfamily. Heterotetramer upon binding of the ligand. The heterotetramer is composed of an ephrin dimer and a receptor dimer. Oligomerization is probably required to induce biological responses. Phosphorylated. Autophosphorylates upon ligand-binding. Autophosphorylation on Tyr-604 is required for interaction with SH2 domain-containing proteins. As to expression, present in 10-day embryonic brain and body tissues. Prominent expression in kidney. Lower expression in lung, and barely detectable in brain, liver, heart, skeletal muscle and thymus.

The protein localises to the cell membrane. The protein resides in the cell projection. It is found in the dendrite. The enzyme catalyses L-tyrosyl-[protein] + ATP = O-phospho-L-tyrosyl-[protein] + ADP + H(+). Functionally, receptor tyrosine kinase which binds promiscuously transmembrane ephrin-B family ligands residing on adjacent cells, leading to contact-dependent bidirectional signaling into neighboring cells. The signaling pathway downstream of the receptor is referred to as forward signaling while the signaling pathway downstream of the ephrin ligand is referred to as reverse signaling. Generally has an overlapping and redundant function with EPHB2. Like EPHB2, functions in axon guidance during development. In addition to its role in axon guidance also plays an important redundant role with other ephrin-B receptors in development and maturation of dendritic spines and the formation of excitatory synapses. May control other aspects of development through regulation of cell migration and positioning. This is Ephrin type-B receptor 3 (EPHB3) from Gallus gallus (Chicken).